A 256-amino-acid polypeptide reads, in one-letter code: 2-C-methyl-D-erythritol 4-phosphate cytidylyltransferase (256 aa).

Belongs to the IspD/TarI cytidylyltransferase family. IspD subfamily.

The enzyme catalyses 2-C-methyl-D-erythritol 4-phosphate + CTP + H(+) = 4-CDP-2-C-methyl-D-erythritol + diphosphate. Its pathway is isoprenoid biosynthesis; isopentenyl diphosphate biosynthesis via DXP pathway; isopentenyl diphosphate from 1-deoxy-D-xylulose 5-phosphate: step 2/6. In terms of biological role, catalyzes the formation of 4-diphosphocytidyl-2-C-methyl-D-erythritol from CTP and 2-C-methyl-D-erythritol 4-phosphate (MEP). In Corynebacterium glutamicum (strain R), this protein is 2-C-methyl-D-erythritol 4-phosphate cytidylyltransferase.